A 653-amino-acid polypeptide reads, in one-letter code: Cell wall adhesin EAP1 (653 aa).

The signal sequence occupies residues 1–18; the sequence is MKVSQILPLAGAISVASG. The segment at 19 to 146 is N-terminal cell-cell adhesion domain; that stretch reads FWIPDFSNKQ…EYTTYCPLTS (128 aa). A disordered region spans residues 144-267; that stretch reads LTSTPATEST…TETASSTPVE (124 aa). Positions 145 to 267 are enriched in low complexity; it reads TSTPATESTP…TETASSTPVE (123 aa). 15 consecutive repeat copies span residues 147 to 152, 153 to 158, 159 to 164, 165 to 170, 171 to 176, 177 to 182, 192 to 197, 198 to 203, 204 to 209, 210 to 215, 216 to 221, 222 to 227, 228 to 233, 234 to 248, and 249 to 254. A 15 X 6 AA tandem repeats, Ser/Thr-rich region spans residues 147 to 254; the sequence is TPATESTPAT…STETTPATES (108 aa). Residue Asn323 is glycosylated (N-linked (GlcNAc...) asparagine). Disordered regions lie at residues 324 to 540 and 572 to 595; these read TSTP…TTQP and EGGCVPEGQQTETSPSVPTNGPEV. Repeat copies occupy residues 326-345, 346-365, 366-389, 390-413, 414-433, 434-457, 458-477, 478-501, 502-521, and 522-541. The tract at residues 326-541 is 10 X 20 AA approximate tandem repeats; the sequence is TPAAPGTPVE…EATPVTTQPV (216 aa). Low complexity-rich tracts occupy residues 341 to 353 and 361 to 538; these read PGTETTPAAPGTP and PGTE…PVTT. The segment covering 579–590 has biased composition (polar residues); sequence GQQTETSPSVPT. The GPI-anchor amidated glycine moiety is linked to residue Gly632. The propeptide at 633–653 is removed in mature form; sequence SGSALKKPYYGLAVAALVYFM.

This sequence belongs to the PGA18 family. The GPI-anchor is attached to the protein in the endoplasmic reticulum and serves to target the protein to the cell surface. There, the glucosamine-inositol phospholipid moiety is cleaved off and the GPI-modified mannoprotein is covalently attached via its lipidless GPI glycan remnant to the 1,6-beta-glucan of the outer cell wall layer.

It localises to the secreted. Its subcellular location is the cell wall. It is found in the membrane. Cell wall protein which mediates cell-cell and cell-substrate adhesion. Required for biofilm formation and plays a role in virulence. This is Cell wall adhesin EAP1 (EAP1) from Candida albicans (strain SC5314 / ATCC MYA-2876) (Yeast).